The chain runs to 56 residues: Large ribosomal subunit protein uL30 (56 aa).

The protein belongs to the universal ribosomal protein uL30 family. Part of the 50S ribosomal subunit.

The polypeptide is Large ribosomal subunit protein uL30 (Oleidesulfovibrio alaskensis (strain ATCC BAA-1058 / DSM 17464 / G20) (Desulfovibrio alaskensis)).